We begin with the raw amino-acid sequence, 179 residues long: Large ribosomal subunit protein uL6c (179 aa).

The protein belongs to the universal ribosomal protein uL6 family. As to quaternary structure, part of the 50S ribosomal subunit.

It is found in the plastid. It localises to the chloroplast. In terms of biological role, binds 23S rRNA. This is Large ribosomal subunit protein uL6c (rpl6) from Trieres chinensis (Marine centric diatom).